The chain runs to 89 residues: UPF0223 protein BCE_4008 (89 aa).

The protein belongs to the UPF0223 family.

The polypeptide is UPF0223 protein BCE_4008 (Bacillus cereus (strain ATCC 10987 / NRS 248)).